Consider the following 263-residue polypeptide: Lens fiber major intrinsic protein (263 aa).

The Cytoplasmic portion of the chain corresponds to 1–9 (MWELRSASF). A helical membrane pass occupies residues 10 to 29 (WRAIFAEFFATLFYVFFGLG). Topologically, residues 30 to 41 (ASLRWAPGPLHV) are extracellular. A helical membrane pass occupies residues 42–59 (LQVALAFGLALATLVQTV). At 60–61 (GH) the chain is on the cytoplasmic side. The segment at residues 62 to 77 (ISGAHVNPAVTFAFLV) is an intramembrane region (discontinuously helical). The NPA 1 motif lies at 68–70 (NPA). Residues 78 to 82 (GSQMS) are Cytoplasmic-facing. A helical transmembrane segment spans residues 83 to 106 (LLRAFCYIAAQLLGAVAGAAVLYS). Residues 107-127 (VTPPAVRGNLALNTLHAGVSV) are Extracellular-facing. Residues 128 to 148 (GQATTVEIFLTLQFVLCIFAT) form a helical membrane-spanning segment. At 149–156 (YDERRNGR) the chain is on the cytoplasmic side. The helical transmembrane segment at 157 to 175 (MGSVALAVGFSLTLGHLFG) threads the bilayer. At 176–178 (MYY) the chain is on the extracellular side. Residues 179-193 (TGAGMNPARSFAPAI) constitute an intramembrane region (discontinuously helical). The short motif at 184 to 186 (NPA) is the NPA 2 element. Residues 194-200 (LTRNFSN) are Extracellular-facing. Residues 201–222 (HWVYWVGPIIGGGLGSLLYDFL) traverse the membrane as a helical segment. Topologically, residues 223 to 263 (LFPRLKSVSERLSILKGARPSDSNGQPEGTGEPVELKTQAL) are cytoplasmic. The segment at 227–237 (LKSVSERLSIL) is interaction with CALM. Ser235, Ser243, and Ser245 each carry phosphoserine. The segment at 240–263 (ARPSDSNGQPEGTGEPVELKTQAL) is disordered. Asn246 bears the Deamidated asparagine mark.

Belongs to the MIP/aquaporin (TC 1.A.8) family. As to quaternary structure, homotetramer; each monomer provides an independent water pore. Two homotetramers on opposing membranes can dimerize, forming a cell-cell junction. Interacts with CALM; the calcium-calmodulin/CALM complex interacts with the cytoplasmic domains of two aquaporins, leading to channel closure. Interacts with BFSP1 (via C-terminus); prevents calcium-dependent inhibition of the water channel activity. Subject to partial proteolytic cleavage in the eye lens core. Partial proteolysis promotes interactions between tetramers from adjoining membranes. Post-translationally, fatty acylated at Met-1 and Lys-238. The acyl modifications, in decreasing order of ion abundance, are: oleoyl (C18:1) &gt; palmitoyl (C16:0) &gt; stearoyl (C18:0) &gt; eicosenoyl (C20:1) &gt; dihomo-gamma-linolenoyl (C20:3) &gt; palmitoleoyl (C16:1) &gt; eicosadienoyl (C20:2).

It localises to the cell membrane. It is found in the cell junction. The catalysed reaction is H2O(in) = H2O(out). Its activity is regulated as follows. The water channel activity is inhibited by calcium through calmodulin/CALM. Functionally, aquaporins form homotetrameric transmembrane channels, with each monomer independently mediating water transport across the plasma membrane along its osmotic gradient. Specifically expressed in lens fiber cells, this aquaporin is crucial for maintaining lens water homeostasis and transparency. Beyond water permeability, it also acts as a cell-to-cell adhesion molecule, forming thin junctions between lens fiber cells that are essential for maintaining the ordered structure and transparency of the lens. The polypeptide is Lens fiber major intrinsic protein (Mus musculus (Mouse)).